The sequence spans 500 residues: Matrilin-1 (500 aa).

An N-terminal signal peptide occupies residues 1–29 (MKVTSGPAFALCSLLLLLLLLLQVPDSLS). Residues 30–226 (LVPQPRGHLC…AKKFQEAFCV (197 aa)) enclose the VWFA 1 domain. A glycan (N-linked (GlcNAc...) asparagine) is linked at Asn80. Residues 227–267 (VSDLCATGDHDCEQLCVSSPGSYTCACHEGFTLNSDGKTCN) enclose the EGF-like domain. 3 disulfides stabilise this stretch: Cys231–Cys242, Cys238–Cys251, and Cys253–Cys266. Positions 268 to 457 (VCRGGGSGSA…GKKLQKQICV (190 aa)) constitute a VWFA 2 domain. An N-linked (GlcNAc...) asparagine glycan is attached at Asn348. Positions 471–499 (EAKVEGLLQALTRKLEAVSGRLAVLENRI) form a coiled coil.

As to quaternary structure, homotrimer. Part of a complex composed of MATN1 (via VWFA1 domain), type 2 collagens and type 6 collagens. Forms a complex (via covalent bonds) with ACAN; the interaction increases in abundance with increasing age of the organism via an increase in occupancy of MATN1 binding sites. Interacts with COMP. In terms of processing, N-glycosylated; reduces binding affinity for type 2 collagens. In terms of tissue distribution, expressed in femoral head articular cartilage. Expressed in the trachea and extraskeletal tissue around the eye.

It localises to the secreted. The protein resides in the extracellular space. The protein localises to the extracellular matrix. In terms of biological role, a major component of the extracellular matrix of non-articular cartilage. Binds to type 2 collagens and forms long concatenated protein networks as part of the extracellular matrix. Required for the network-like organization and bundling of collagen fibrils surrounding chondrocytes in the zones of maturation and hypertrophy. Required for mechanotransduction and adaption to mechanical loading in cartilage chondrocytes, resulting in an increase in expression of the extracellular matrix components ACAN and COL2A1. Acts as a moderator of angiogenesis in response to injury. The chain is Matrilin-1 from Mus musculus (Mouse).